A 360-amino-acid polypeptide reads, in one-letter code: Membrane-bound lytic murein transglycosylase C (360 aa).

Positions 1–16 are cleaved as a signal peptide; it reads MKKLLALAVIAPLLIS. Residue Cys17 is the site of N-palmitoyl cysteine attachment. A lipid anchor (S-diacylglycerol cysteine) is attached at Cys17.

This sequence belongs to the transglycosylase Slt family.

It is found in the cell outer membrane. The catalysed reaction is Exolytic cleavage of the (1-&gt;4)-beta-glycosidic linkage between N-acetylmuramic acid (MurNAc) and N-acetylglucosamine (GlcNAc) residues in peptidoglycan, from either the reducing or the non-reducing ends of the peptidoglycan chains, with concomitant formation of a 1,6-anhydrobond in the MurNAc residue.. In terms of biological role, murein-degrading enzyme. May play a role in recycling of muropeptides during cell elongation and/or cell division. This chain is Membrane-bound lytic murein transglycosylase C, found in Salmonella typhi.